A 215-amino-acid chain; its full sequence is MGLAGVCVLRRSAGYILGGAARQSVAATAAARRRSEGGWASGGVRSFSRAAAAMAPIKVGDAIPAVEVFEGEPGNKVNLAELFKGKKGVLFGVPGAFTPGCSKTHLPGFVEQAEALKAKGVQVLACLSVNDAFVTGEWGRAHKAEGKVRLLADPTGAFGKETDLLLDDSLVSIFGNRRLKRFSMVVQDGIVKALNVEPDGTGLTCSLAPSIISQL.

The N-terminal 53 residues, Met1 to Ala53, are a transit peptide targeting the mitochondrion. Residues Ile57–Leu215 enclose the Thioredoxin domain. Lys76 is subject to N6-acetyllysine. Position 84 is an N6-acetyllysine; alternate (Lys84). Lys84 is subject to N6-succinyllysine; alternate. Cys101 acts as the Cysteine sulfenic acid (-SOH) intermediate in catalysis. Cys101 carries S-palmitoyl cysteine lipidation. Cys101 and Cys205 form a disulfide bridge. Position 117 is an N6-succinyllysine (Lys117). Phosphoserine occurs at positions 172 and 183. Positions Ser213–Leu215 match the Microbody targeting signal motif.

The protein belongs to the peroxiredoxin family. Prx5 subfamily. In terms of assembly, monomer. In terms of processing, S-palmitoylated. Palmitoylation occurs on the active site, inhibiting its reactivity; therefore PRDX5 palmitoylation status determines its antioxidant capacity. Post-translationally, S-palmitoylated. Depalmitoylated by ABHD10.

It localises to the mitochondrion. It is found in the cytoplasm. The protein resides in the peroxisome matrix. It catalyses the reaction a hydroperoxide + [thioredoxin]-dithiol = an alcohol + [thioredoxin]-disulfide + H2O. Its function is as follows. Thiol-specific peroxidase that catalyzes the reduction of hydrogen peroxide and organic hydroperoxides to water and alcohols, respectively. Plays a role in cell protection against oxidative stress by detoxifying peroxides and as sensor of hydrogen peroxide-mediated signaling events. This chain is Peroxiredoxin-5, mitochondrial (PRDX5), found in Chlorocebus aethiops (Green monkey).